We begin with the raw amino-acid sequence, 525 residues long: Membrane-bound lytic murein transglycosylase F (525 aa).

An N-terminal signal peptide occupies residues 1–24; sequence MQIRHFNRLKRSVLLFASVLLLSA. The non-LT domain stretch occupies residues 25–284; that stretch reads CQIESQPKSE…SLEEKYIGHI (260 aa). The tract at residues 286-525 is LT domain; the sequence is AFDYVDTRAF…VDEDLDQEEE (240 aa). Glutamate 329 is an active-site residue. Residues 506–525 form a disordered region; sequence VSGASDITNEVDEDLDQEEE. Positions 514-525 are enriched in acidic residues; the sequence is NEVDEDLDQEEE.

It in the N-terminal section; belongs to the bacterial solute-binding protein 3 family. The protein in the C-terminal section; belongs to the transglycosylase Slt family.

The protein resides in the cell outer membrane. It catalyses the reaction Exolytic cleavage of the (1-&gt;4)-beta-glycosidic linkage between N-acetylmuramic acid (MurNAc) and N-acetylglucosamine (GlcNAc) residues in peptidoglycan, from either the reducing or the non-reducing ends of the peptidoglycan chains, with concomitant formation of a 1,6-anhydrobond in the MurNAc residue.. In terms of biological role, murein-degrading enzyme that degrades murein glycan strands and insoluble, high-molecular weight murein sacculi, with the concomitant formation of a 1,6-anhydromuramoyl product. Lytic transglycosylases (LTs) play an integral role in the metabolism of the peptidoglycan (PG) sacculus. Their lytic action creates space within the PG sacculus to allow for its expansion as well as for the insertion of various structures such as secretion systems and flagella. The polypeptide is Membrane-bound lytic murein transglycosylase F (Vibrio parahaemolyticus serotype O3:K6 (strain RIMD 2210633)).